The primary structure comprises 226 residues: Sugar transporter SWEET1 (226 aa).

The next 7 helical transmembrane spans lie at 8 to 28 (LLST…AMIC), 42 to 62 (GVPF…GVLT), 67 to 87 (IVLV…IYYV), 94 to 114 (AFVR…VVYT), 127 to 147 (ITGI…LATL), 161 to 181 (LPLI…GILI), and 185 to 205 (FIQI…SLFV). Residues 8–92 (LLSTTAVIST…LIYYVFTVNK (85 aa)) form the MtN3/slv 1 domain. The 82-residue stretch at 129–210 (GIFCCIVTVC…LSLFVVYPPR (82 aa)) folds into the MtN3/slv 2 domain.

It belongs to the SWEET sugar transporter family.

It is found in the golgi apparatus membrane. It localises to the cell membrane. Its function is as follows. Mediates both low-affinity uptake and efflux of sugar across the membrane. This is Sugar transporter SWEET1 (slv) from Drosophila pseudoobscura pseudoobscura (Fruit fly).